A 361-amino-acid chain; its full sequence is Chorismate synthase (361 aa).

The disordered stretch occupies residues 37–59 (TEEDLQHDLDRRRPGTSRYTTPR). Residues 40–49 (DLQHDLDRRR) are compositionally biased toward basic and acidic residues. Residues arginine 48 and arginine 54 each coordinate NADP(+). FMN-binding positions include 125-127 (RSS), 238-239 (NA), glycine 278, 293-297 (KPTSS), and arginine 319.

It belongs to the chorismate synthase family. As to quaternary structure, homotetramer. It depends on FMNH2 as a cofactor.

It carries out the reaction 5-O-(1-carboxyvinyl)-3-phosphoshikimate = chorismate + phosphate. Its pathway is metabolic intermediate biosynthesis; chorismate biosynthesis; chorismate from D-erythrose 4-phosphate and phosphoenolpyruvate: step 7/7. In terms of biological role, catalyzes the anti-1,4-elimination of the C-3 phosphate and the C-6 proR hydrogen from 5-enolpyruvylshikimate-3-phosphate (EPSP) to yield chorismate, which is the branch point compound that serves as the starting substrate for the three terminal pathways of aromatic amino acid biosynthesis. This reaction introduces a second double bond into the aromatic ring system. The chain is Chorismate synthase from Erwinia tasmaniensis (strain DSM 17950 / CFBP 7177 / CIP 109463 / NCPPB 4357 / Et1/99).